We begin with the raw amino-acid sequence, 535 residues long: Probable lipid II flippase MurJ (535 aa).

Transmembrane regions (helical) follow at residues 90–110, 131–151, 159–179, 192–212, 233–253, 274–294, 316–336, 350–370, 388–408, 413–433, 451–471, and 484–504; these read VLFT…PFIV, FATI…MAGM, FAAA…LAYA, DLSW…WVAV, LLVL…NLLI, IYQL…LPEL, FTLF…EPIV, TVVV…FVLI, IFAG…FPSL, IATA…ATLV, LVIA…WLAF, and LTLC…AFGI.

This sequence belongs to the MurJ/MviN family.

It localises to the cell inner membrane. It participates in cell wall biogenesis; peptidoglycan biosynthesis. Its function is as follows. Involved in peptidoglycan biosynthesis. Transports lipid-linked peptidoglycan precursors from the inner to the outer leaflet of the cytoplasmic membrane. The protein is Probable lipid II flippase MurJ of Rhizobium meliloti (strain 1021) (Ensifer meliloti).